We begin with the raw amino-acid sequence, 187 residues long: MEVEEIYKHQEVKMQAPAFRDKKQGVSAKNQGAHDPDYENITLAFKNQDHAKGGHSRPTSQVPAQCRPPSDSTQVPCWLYRAILSLYILLALAFVLCIILSAFIMVKNAEMSKELLGFKRELWNVSNSVQACEERQKRGWDSVQQSITMVRSKIDRLETTLAGIKNIDTKVQKILEVLQKMPQSSPQ.

The Cytoplasmic portion of the chain corresponds to 1–85 (MEVEEIYKHQ…PCWLYRAILS (85 aa)). The disordered stretch occupies residues 49–71 (DHAKGGHSRPTSQVPAQCRPPSD). The helical; Signal-anchor for type II membrane protein transmembrane segment at 86 to 106 (LYILLALAFVLCIILSAFIMV) threads the bilayer. Residues 107–187 (KNAEMSKELL…LQKMPQSSPQ (81 aa)) lie on the Extracellular side of the membrane. A glycan (N-linked (GlcNAc...) asparagine) is linked at Asn-124.

As to expression, expressed specifically in mast cells. Found primarily in lung.

It is found in the membrane. The protein is Mast cell-expressed membrane protein 1 of Homo sapiens (Human).